Reading from the N-terminus, the 482-residue chain is MSEISKNEALILKYLASKNQEIEESNIEIKGLSRQDIASATSWLQVKGLIDVKTREEVAYVLTDEGKRYAENGLPELRAYSILKRKGKLSLRDLQEAMPDEYKIVLAQLAKFGITPKNGVLEYSDGHIEAEISRRQRFLSDLNTDDQEMIEHFKRRKNVIEEKKRSVRIVSINSKGLEQLNNFDQFEAIGEIDSGIITSQAWKTAPFRKYDLDAPVSPTKSYAKHPLVYFINEIRRIFLDMGFTEMSGHYIESALWDMDALFIPQDHPARDMQDTFYVKDSNFTIEHPEIEKRIKRIHERGFDGYSGWGYRWSSDDGKKLILRTHTTVTTARYLYEHNTYPQAIFSVEKVFRHESVDWKHLAEFYQIEGAVYDKNVSVATLKWILRTFYGKLGFEKIRLVPSYYPYTEPSLDVVVEVDGKEMELGGSGIFRPEVGKILGLKAPVMAWGMGLERLAMLYYGLTDVRDLYNTDFSFLEGYKIKY.

L-phenylalanine is bound by residues Thr-327, 366–368 (QIE), and Tyr-406. Glu-408 is a binding site for Mg(2+). An L-phenylalanine-binding site is contributed by Phe-430.

The protein belongs to the class-II aminoacyl-tRNA synthetase family. Phe-tRNA synthetase alpha subunit type 2 subfamily. Tetramer of two alpha and two beta subunits. It depends on Mg(2+) as a cofactor.

Its subcellular location is the cytoplasm. The catalysed reaction is tRNA(Phe) + L-phenylalanine + ATP = L-phenylalanyl-tRNA(Phe) + AMP + diphosphate + H(+). In Thermoplasma volcanium (strain ATCC 51530 / DSM 4299 / JCM 9571 / NBRC 15438 / GSS1), this protein is Phenylalanine--tRNA ligase alpha subunit.